The chain runs to 236 residues: Protein-S-isoprenylcysteine O-methyltransferase (236 aa).

A run of 4 helical transmembrane segments spans residues 3–23 (NLHT…LGCV), 24–44 (FGLG…FFAF), 76–96 (AYWL…GKSF), and 108–128 (FLIN…LCLG). Residues 155 to 158 (HLLV), tyrosine 163, and 168 to 171 (HPSY) contribute to the S-adenosyl-L-methionine site. The helical transmembrane segment at 174-194 (FFIWALGTQMLLGNFVSTLLF) threads the bilayer. Arginine 205 is a binding site for substrate. Glutamate 209 lines the S-adenosyl-L-methionine pocket.

Belongs to the class VI-like SAM-binding methyltransferase superfamily. Isoprenylcysteine carboxyl methyltransferase family.

Its subcellular location is the membrane. The catalysed reaction is [protein]-C-terminal S-[(2E,6E)-farnesyl]-L-cysteine + S-adenosyl-L-methionine = [protein]-C-terminal S-[(2E,6E)-farnesyl]-L-cysteine methyl ester + S-adenosyl-L-homocysteine. Its function is as follows. Mediates C-terminal methylation of the isoprenylated C-terminal cysteine in M-factor. This chain is Protein-S-isoprenylcysteine O-methyltransferase (mam4), found in Schizosaccharomyces pombe (strain 972 / ATCC 24843) (Fission yeast).